The following is a 400-amino-acid chain: Large envelope protein (400 aa).

An N-acetylmethionine modification is found at methionine 1. Glycine 2 carries the N-myristoyl glycine; by host lipid modification. A pre-S1 region spans residues glycine 2–alanine 119. The pre-S stretch occupies residues glycine 2–asparagine 174. At glycine 2–glycine 181 the chain is on the virion surface; in external conformation side. Residues glycine 2 to arginine 253 lie on the Intravirion; in internal conformation side of the membrane. Proline 4 carries an N-linked (GlcNAc...) asparagine glycan. Residues valine 84 to aspartate 114 form a disordered region. Residues methionine 120–asparagine 174 are pre-S2. Residues leucine 182–isoleucine 202 traverse the membrane as a helical segment. Topologically, residues proline 203–arginine 253 are intravirion; in external conformation. Residues phenylalanine 254–tyrosine 274 form a helical membrane-spanning segment. Residues glutamine 275 to serine 348 lie on the Virion surface side of the membrane. Asparagine 320 carries N-linked (GlcNAc...) asparagine; by host glycosylation. Residues leucine 349–isoleucine 369 form a helical membrane-spanning segment. Topologically, residues tryptophan 370–tryptophan 375 are intravirion. The helical transmembrane segment at glycine 376–valine 398 threads the bilayer. The Virion surface segment spans residues serine 399–isoleucine 400.

This sequence belongs to the orthohepadnavirus major surface antigen family. In terms of assembly, in its internal form (Li-HBsAg), interacts with the capsid protein and with the isoform S. Interacts with host chaperone CANX. As to quaternary structure, associates with host chaperone CANX through its pre-S2 N glycan; this association may be essential for isoform M proper secretion. Interacts with isoform L. Interacts with the antigens of satellite virus HDV (HDVAgs); this interaction is required for encapsidation of HDV genomic RNA. Post-translationally, isoform M is N-terminally acetylated by host at a ratio of 90%, and N-glycosylated by host at the pre-S2 region. In terms of processing, myristoylated.

The protein resides in the virion membrane. Its function is as follows. The large envelope protein exists in two topological conformations, one which is termed 'external' or Le-HBsAg and the other 'internal' or Li-HBsAg. In its external conformation the protein attaches the virus to cell receptors and thereby initiating infection. This interaction determines the species specificity and liver tropism. This attachment induces virion internalization predominantly through caveolin-mediated endocytosis. The large envelope protein also assures fusion between virion membrane and endosomal membrane. In its internal conformation the protein plays a role in virion morphogenesis and mediates the contact with the nucleocapsid like a matrix protein. The middle envelope protein plays an important role in the budding of the virion. It is involved in the induction of budding in a nucleocapsid independent way. In this process the majority of envelope proteins bud to form subviral lipoprotein particles of 22 nm of diameter that do not contain a nucleocapsid. This chain is Large envelope protein, found in Homo sapiens (Human).